The primary structure comprises 168 residues: HTH-type transcriptional regulator IscR (168 aa).

The region spanning 2 to 131 is the HTH rrf2-type domain; it reads KLTSKGRYAV…NNITLGELMT (130 aa). Residues 28-51 constitute a DNA-binding region (H-T-H motif); the sequence is LADISERQGISLSYLEQLFSKLRK. Residues Cys-92, Cys-98, and Cys-104 each contribute to the [2Fe-2S] cluster site.

Requires [2Fe-2S] cluster as cofactor.

Regulates the transcription of several operons and genes involved in the biogenesis of Fe-S clusters and Fe-S-containing proteins. The protein is HTH-type transcriptional regulator IscR of Vibrio parahaemolyticus serotype O3:K6 (strain RIMD 2210633).